The primary structure comprises 85 residues: Beta-insect depressant toxin LqhIT2 (85 aa).

Positions 1-21 (MKLLLLLIVSASMLIESLVNA) are cleaved as a signal peptide. Residues 22–82 (DGYIKRRDGC…TWKSETNTCG (61 aa)) enclose the LCN-type CS-alpha/beta domain. Cystine bridges form between C31–C81, C35–C56, C42–C63, and C46–C65. G82 is modified (glycine amide).

This sequence belongs to the long (4 C-C) scorpion toxin superfamily. Sodium channel inhibitor family. Beta subfamily. In terms of tissue distribution, expressed by the venom gland.

Its subcellular location is the secreted. Depressant insect beta-toxins cause a transient contraction paralysis followed by a slow flaccid paralysis. They bind voltage-independently at site-4 of sodium channels (Nav) and shift the voltage of activation toward more negative potentials thereby affecting sodium channel activation and promoting spontaneous and repetitive firing. This toxin is active only on insects. The polypeptide is Beta-insect depressant toxin LqhIT2 (Leiurus hebraeus (Hebrew deathstalker scorpion)).